The primary structure comprises 286 residues: uncharacterized protein (286 aa).

Residues 1–47 (MAIPFLHKGGSDDSTHHHTHDYDHHNHDHHGHDHHSHDSSSNSSSEA) form a disordered region. Basic and acidic residues predominate over residues 9–26 (GGSDDSTHHHTHDYDHHN). Position 93–100 (93–100 (GPVGSGKT)) interacts with GTP.

This sequence belongs to the SIMIBI class G3E GTPase family. UreG subfamily.

It is found in the cytoplasm. The protein localises to the nucleus. Functionally, probably facilitates nickel incorporation. This is an uncharacterized protein from Schizosaccharomyces pombe (strain 972 / ATCC 24843) (Fission yeast).